Here is a 461-residue protein sequence, read N- to C-terminus: uncharacterized protein (461 aa).

Transmembrane regions (helical) follow at residues 18 to 38 (IITW…FLIY) and 124 to 144 (FIFL…ILSI). PLD phosphodiesterase domains are found at residues 197-224 (YNYR…ADEY) and 374-401 (TPGF…DYRS).

Belongs to the phospholipase D family. Cardiolipin synthase subfamily.

The protein localises to the cell membrane. This is an uncharacterized protein from Streptococcus mutans serotype c (strain ATCC 700610 / UA159).